We begin with the raw amino-acid sequence, 106 residues long: Integration host factor subunit beta (106 aa).

The segment at 57–106 is disordered; that stretch reads PARAGRNPRTGEHVPVEQKSVPFFKTGKEMRERLNRDGLDGATPPSPPAA. The segment covering 82–95 has biased composition (basic and acidic residues); sequence TGKEMRERLNRDGL.

This sequence belongs to the bacterial histone-like protein family. As to quaternary structure, heterodimer of an alpha and a beta chain.

This protein is one of the two subunits of integration host factor, a specific DNA-binding protein that functions in genetic recombination as well as in transcriptional and translational control. This chain is Integration host factor subunit beta, found in Afipia carboxidovorans (strain ATCC 49405 / DSM 1227 / KCTC 32145 / OM5) (Oligotropha carboxidovorans).